A 342-amino-acid polypeptide reads, in one-letter code: Alanine racemase (342 aa).

The active-site Proton acceptor; specific for D-alanine is Lys33. Lys33 is subject to N6-(pyridoxal phosphate)lysine. Arg128 is a substrate binding site. The Proton acceptor; specific for L-alanine role is filled by Tyr240. A substrate-binding site is contributed by Met288.

It belongs to the alanine racemase family. Pyridoxal 5'-phosphate is required as a cofactor.

The enzyme catalyses L-alanine = D-alanine. Its pathway is amino-acid biosynthesis; D-alanine biosynthesis; D-alanine from L-alanine: step 1/1. Catalyzes the interconversion of L-alanine and D-alanine. May also act on other amino acids. This Jannaschia sp. (strain CCS1) protein is Alanine racemase (alr).